A 185-amino-acid polypeptide reads, in one-letter code: Ribosome-recycling factor (185 aa).

The protein belongs to the RRF family.

It is found in the cytoplasm. In terms of biological role, responsible for the release of ribosomes from messenger RNA at the termination of protein biosynthesis. May increase the efficiency of translation by recycling ribosomes from one round of translation to another. The polypeptide is Ribosome-recycling factor (Chromohalobacter salexigens (strain ATCC BAA-138 / DSM 3043 / CIP 106854 / NCIMB 13768 / 1H11)).